Consider the following 186-residue polypeptide: Nucleoside diphosphate kinase 6 (186 aa).

ATP is bound by residues lysine 19, phenylalanine 68, arginine 96, threonine 102, arginine 116, and asparagine 126. Histidine 129 functions as the Pros-phosphohistidine intermediate in the catalytic mechanism.

This sequence belongs to the NDK family. It depends on Mg(2+) as a cofactor. As to expression, expressed at a moderately low level in many tissues. Most abundant in kidney, prostate, ovary, intestine, and spleen.

It carries out the reaction a 2'-deoxyribonucleoside 5'-diphosphate + ATP = a 2'-deoxyribonucleoside 5'-triphosphate + ADP. It catalyses the reaction a ribonucleoside 5'-diphosphate + ATP = a ribonucleoside 5'-triphosphate + ADP. Functionally, major role in the synthesis of nucleoside triphosphates other than ATP. The ATP gamma phosphate is transferred to the NDP beta phosphate via a ping-pong mechanism, using a phosphorylated active-site intermediate. Inhibitor of p53-induced apoptosis. This is Nucleoside diphosphate kinase 6 (NME6) from Homo sapiens (Human).